Reading from the N-terminus, the 510-residue chain is Aspartate kinase FUB3 (510 aa).

ACT domains follow at residues 372–440 and 446–510; these read ILSN…VLPD and LVGA…KNAM.

The protein belongs to the aspartokinase family.

The catalysed reaction is L-aspartate + ATP = 4-phospho-L-aspartate + ADP. The protein operates within mycotoxin biosynthesis. Functionally, aspartate kinase; part of the gene cluster that mediates the biosynthesis of fusaric acid, a mycotoxin with low to moderate toxicity to animals and humans, but with high phytotoxic properties. L-aspartate is suggested as fusaric acid amino acid precursor that is activated and further processed to O-acetyl-L-homoserine by cluster enzymes aspartate kinase FUB3 and homoserine O-acetyltransferase FUB5, as well as enzymes of the primary metabolism. The polyketide synthase (PKS) FUB1 generates the triketide trans-2-hexenal which is presumptively released by the hydrolase FUB4 and linked to the NRPS-bound amino acid precursor by NAD(P)-dependent dehydrogenase FUB6. FUB1, FUB4, and the non-canonical NRPS Fub8 may form an enzyme complex. Further processing of the NRPS-bound intermediate might be carried out by FUB6 and the sulfhydrylase FUB7, enabling a spontaneous electrocyclization to close the carbon backbone of fusaric acid. Dihydrofusaric acid is likely to be released via reduction by the thioester reductase (TR) domain of FUB8 whereupon the final oxidation to fusaric acid may (also) be performed by the FMN-dependent dehydrogenase FUB9. The polypeptide is Aspartate kinase FUB3 (Gibberella moniliformis (strain M3125 / FGSC 7600) (Maize ear and stalk rot fungus)).